The sequence spans 435 residues: Adenylosuccinate synthetase (435 aa).

GTP contacts are provided by residues 11-17 (GDEGKGK) and 39-41 (GHT). Catalysis depends on Asp12, which acts as the Proton acceptor. Asp12 and Gly39 together coordinate Mg(2+). IMP is bound by residues 12-15 (DEGK), 37-40 (NAGH), Thr128, Arg142, Gln223, Thr238, and Arg302. His40 serves as the catalytic Proton donor. 298–304 (SVTGRPR) contributes to the substrate binding site. Residues Arg304, 330-332 (KLD), and 412-414 (STG) contribute to the GTP site.

Belongs to the adenylosuccinate synthetase family. As to quaternary structure, homodimer. Mg(2+) serves as cofactor.

The protein localises to the cytoplasm. It carries out the reaction IMP + L-aspartate + GTP = N(6)-(1,2-dicarboxyethyl)-AMP + GDP + phosphate + 2 H(+). The protein operates within purine metabolism; AMP biosynthesis via de novo pathway; AMP from IMP: step 1/2. In terms of biological role, plays an important role in the de novo pathway of purine nucleotide biosynthesis. Catalyzes the first committed step in the biosynthesis of AMP from IMP. In Coxiella burnetii (strain RSA 331 / Henzerling II), this protein is Adenylosuccinate synthetase.